We begin with the raw amino-acid sequence, 578 residues long: Trehalase (578 aa).

Positions 1-19 (MPGSTWELHLLLLLGLGLG) are cleaved as a signal peptide. An N-linked (GlcNAc...) asparagine glycan is attached at asparagine 78. Residues arginine 168, 175-176 (WD), asparagine 212, and 221-223 (RSQ) each bind substrate. N-linked (GlcNAc...) asparagine glycosylation is present at asparagine 261. Residues 286–288 (RPE) and glycine 319 contribute to the substrate site. Aspartate 321 functions as the Proton donor/acceptor in the catalytic mechanism. N-linked (GlcNAc...) asparagine glycosylation occurs at asparagine 369. The active-site Proton donor/acceptor is the glutamate 514. Glutamate 528 contributes to the substrate binding site. Serine 555 carries the GPI-anchor amidated serine lipid modification. A propeptide spans 556–578 (GTQLALLEPHCLAAALLLSFLTR) (removed in mature form).

The protein belongs to the glycosyl hydrolase 37 family. Homodimer; disulfide-linked. Expressed in small intestine, kidney, and to a lesser extent in liver.

The protein resides in the cell membrane. The catalysed reaction is alpha,alpha-trehalose + H2O = alpha-D-glucose + beta-D-glucose. In terms of biological role, intestinal trehalase is probably involved in the hydrolysis of ingested trehalose. The polypeptide is Trehalase (TREH) (Oryctolagus cuniculus (Rabbit)).